Here is a 323-residue protein sequence, read N- to C-terminus: Prostaglandin-E(2) 9-reductase (323 aa).

NADP(+) is bound by residues 23-24 and Asp-50; that span reads TY. Tyr-24 lines the substrate pocket. Tyr-55 serves as the catalytic Proton donor. Residue His-117 coordinates substrate. Residues 166–167, Gln-190, 216–221, and 270–280 contribute to the NADP(+) site; these read SN, YSALGS, and KSFTEKRIKEN.

It belongs to the aldo/keto reductase family.

Its subcellular location is the cytoplasm. The enzyme catalyses prostaglandin F2alpha + NADP(+) = prostaglandin E2 + NADPH + H(+). It carries out the reaction (17R,20S)-17,20-dihydroxypregn-4-en-3-one + NADP(+) = 17alpha-hydroxyprogesterone + NADPH + H(+). The catalysed reaction is (17R,20S)-17,20-dihydroxypregn-4-en-3-one + NAD(+) = 17alpha-hydroxyprogesterone + NADH + H(+). Functionally, can convert prostaglandin E2 to prostaglandin F2-alpha. The protein is Prostaglandin-E(2) 9-reductase (AKR1C5) of Oryctolagus cuniculus (Rabbit).